Consider the following 347-residue polypeptide: MPSQQRSSSGSTAKAGDADGDGDAAAVSFLGDKSAKVFIAGHRGMVGSAVHRKLDALGFTNVVVRTRAELDLACQAAVEAFFAAELPRYVILAAAKVGGVHASSAAPAEYLTENLRITVNVVDAARRCGSVRKLLVLASSTIYPADAPQPTPESALLTGPPAEGSEWYAIPKIAGIKMCQAVRAEYGLDAIAAAPNNLYGPRHPFPPEHSHVIPALIRRFHRAKLEGAGEVAVWGSGAAAREFTHVDDLAEAVVVLMERYSGEEHVNVGSGEEVTVRELAEAVRGVVGYEGVVAWDAARPEGVARRVVDSGRMRKLGWEPRVALRDGIQDLYRFYLRHECGGQAHHA.

The interval 1 to 20 is disordered; that stretch reads MPSQQRSSSGSTAKAGDADG. 41-47 serves as a coordination point for NADP(+); that stretch reads GHRGMVG. Tyr168 serves as the catalytic Proton donor/acceptor. NADP(+)-binding positions include Lys172, 195–198, and His211; that span reads PNNL. Residues Arg219, Trp234, Arg241, and Glu301 each contribute to the substrate site.

This sequence belongs to the NAD(P)-dependent epimerase/dehydratase family. Fucose synthase subfamily. In terms of assembly, homodimer.

It catalyses the reaction GDP-beta-L-fucose + NADP(+) = GDP-4-dehydro-alpha-D-rhamnose + NADPH + H(+). It participates in nucleotide-sugar biosynthesis; GDP-L-fucose biosynthesis via de novo pathway; GDP-L-fucose from GDP-alpha-D-mannose: step 2/2. Its function is as follows. Catalyzes the two-step NADP-dependent conversion of GDP-4-dehydro-6-deoxy-D-mannose to GDP-fucose, involving an epimerase and a reductase reaction. This Oryza sativa subsp. japonica (Rice) protein is Putative GDP-L-fucose synthase 2.